We begin with the raw amino-acid sequence, 158 residues long: Cytochrome b562 (158 aa).

4 helical membrane passes run 12–32 (ITLHWAIAGLVLFNYIFGETM), 46–66 (AGVGHYLHVVVGLAVLVLTLV), 87–107 (VAAGLQGLLYLLTLLVPALGM), and 121–141 (HVLAANAIMLLALVHAVSALF). Positions 15 and 53 each coordinate heme b. Heme b-binding residues include His121 and His135.

The protein belongs to the cytochrome b561 family. In terms of assembly, homodimer. Requires heme b as cofactor.

The protein localises to the cell membrane. Functionally, cytochrome b562 is an integral component of the cytochrome b-c1 complex in the cyclic electron transfer system of photosynthetic bacteria. The sequence is that of Cytochrome b562 from Cereibacter sphaeroides (strain ATCC 17023 / DSM 158 / JCM 6121 / CCUG 31486 / LMG 2827 / NBRC 12203 / NCIMB 8253 / ATH 2.4.1.) (Rhodobacter sphaeroides).